A 76-amino-acid polypeptide reads, in one-letter code: UPF0154 protein Sca_0984 (76 aa).

A helical membrane pass occupies residues 4–24 (WLAILLIVAALIIGLVGGFFL).

It belongs to the UPF0154 family.

It localises to the cell membrane. The sequence is that of UPF0154 protein Sca_0984 from Staphylococcus carnosus (strain TM300).